The sequence spans 92 residues: Small ribosomal subunit protein uS19 (92 aa).

The protein belongs to the universal ribosomal protein uS19 family.

In terms of biological role, protein S19 forms a complex with S13 that binds strongly to the 16S ribosomal RNA. The protein is Small ribosomal subunit protein uS19 of Enterococcus faecalis (strain ATCC 700802 / V583).